The following is a 206-amino-acid chain: Ras-related protein Ral-B (206 aa).

21–29 is a GTP binding site; sequence GSGGVGKSA. The Effector region signature appears at 43–51; it reads YEPTKADSY. GTP is bound by residues 68–72, 128–131, and 158–160; these read DTAGQ, NKSD, and SAK. The tract at residues 181-206 is disordered; that stretch reads MSENKDKNGRKSGKSKKSFKERCCLL. Cys203 bears the Cysteine methyl ester mark. Cys203 is lipidated: S-geranylgeranyl cysteine. Positions 204–206 are cleaved as a propeptide — removed in mature form; it reads CLL.

It belongs to the small GTPase superfamily. Ras family. In terms of assembly, interacts with EXOC2/Sec5 and EXOC8/Exo84. Interacts (via effector domain) with RALBP1. Prenylation is essential for membrane localization. Post-translationally, the farnesylated form confers resistance to the proapoptotic and anti-anchorage-dependent growth effects of some geranylgeranyltransferase I inhibitors.

The protein resides in the cell membrane. Its subcellular location is the midbody. The catalysed reaction is GTP + H2O = GDP + phosphate + H(+). Alternates between an inactive form bound to GDP and an active form bound to GTP. Activated by a guanine nucleotide-exchange factor (GEF) and inactivated by a GTPase-activating protein (GAP). In terms of biological role, multifunctional GTPase involved in a variety of cellular processes including gene expression, cell migration, cell proliferation, oncogenic transformation and membrane trafficking. Accomplishes its multiple functions by interacting with distinct downstream effectors. Acts as a GTP sensor for GTP-dependent exocytosis of dense core vesicles. Required both to stabilize the assembly of the exocyst complex and to localize functional exocyst complexes to the leading edge of migrating cells. Required for suppression of apoptosis. In late stages of cytokinesis, upon completion of the bridge formation between dividing cells, mediates exocyst recruitment to the midbody to drive abscission. Involved in ligand-dependent receptor mediated endocytosis of the EGF and insulin receptors. The sequence is that of Ras-related protein Ral-B (Ralb) from Rattus norvegicus (Rat).